A 136-amino-acid polypeptide reads, in one-letter code: HetP-like commitment protein Alr2902 (136 aa).

Residues 94 to 109 (KASTQDLNQSNNSDYL) show a composition bias toward polar residues. Residues 94–120 (KASTQDLNQSNNSDYLTTPEPDKRGNI) are disordered.

Belongs to the HetP family. In bacterial two-hybrid assays interacts robustly with HetR and Alr3234 and weakly with itself, HetP and Asl1930.

Delays heterocyst differentiation and commitment when nitrogen is limiting. Interplay between the 4 HetP paralogs controls the timing of commitment to heterocyst formation and its duration. Epistatic analysis show that the 3 paralogs act upstream of hetP to delay commitment (asl1930, alr3234) or inhibit development (alr2902). Asl1930 and Alr3234 must also attenuate the activity of Alr2902. When only this homolog is present no heterocysts are formed, showing it inhibits development. Ectopic expression partially complements a hetP deletion. The polypeptide is HetP-like commitment protein Alr2902 (Nostoc sp. (strain PCC 7120 / SAG 25.82 / UTEX 2576)).